The sequence spans 170 residues: Putative apoptosis inhibitor ORF87 (170 aa).

BIR repeat units follow at residues R22–K92 and R104–S169.

May act as an apoptosis inhibitor. The chain is Putative apoptosis inhibitor ORF87 from Ostreid herpesvirus 1 (isolate France) (OsHV-1).